The following is an 87-amino-acid chain: Pyocin-S2 immunity protein (87 aa).

Belongs to the colicins ColE2/ColE8/ColE9 and pyocins S1/S2 family.

This is Pyocin-S2 immunity protein (imm2) from Pseudomonas aeruginosa (strain ATCC 15692 / DSM 22644 / CIP 104116 / JCM 14847 / LMG 12228 / 1C / PRS 101 / PAO1).